The chain runs to 410 residues: Proteasomal ubiquitin receptor ADRM1 (410 aa).

Residues 17–130 (SSSKYLVEFR…RKVNEYLNNP (114 aa)) enclose the Pru domain. At Ser18 the chain carries Phosphoserine. The segment covering 191–257 (GSGGPATSSS…PAAQTPSLPA (67 aa)) has biased composition (low complexity). Disordered regions lie at residues 191–264 (GSGG…SSTQ) and 381–410 (FAKA…MSLD). The DEUBAD domain maps to 281 to 395 (PAMPTEGSGV…EGSDSKTDDG (115 aa)). Basic and acidic residues predominate over residues 381 to 401 (FAKAMEGSDSKTDDGDSKDKK).

Belongs to the ADRM1 family. Component of the 19S proteasome regulatory particle complex. The 26S proteasome consists of a 20S core particle (CP) and two 19S regulatory subunits (RP).

Its subcellular location is the cytoplasm. It localises to the nucleus. In terms of biological role, component of the 26S proteasome, a multiprotein complex involved in the ATP-dependent degradation of ubiquitinated proteins. This complex plays a key role in the maintenance of protein homeostasis by removing misfolded or damaged proteins, which could impair cellular functions, and by removing proteins whose functions are no longer required. Therefore, the proteasome participates in numerous cellular processes, including cell cycle progression, apoptosis, or DNA damage repair. Within the complex, functions as a proteasomal ubiquitin receptor. This chain is Proteasomal ubiquitin receptor ADRM1 (adrm1b), found in Danio rerio (Zebrafish).